Here is a 374-residue protein sequence, read N- to C-terminus: Pectinesterase (374 aa).

The N-terminal stretch at 1–31 (MVKLLNSTRELSINALSMLNSFGDMVAQATG) is a signal peptide. Asn-58 and Asn-124 each carry an N-linked (GlcNAc...) asparagine glycan. Positions 133 and 163 each coordinate substrate. Residue Asp-186 is the Proton donor of the active site. Cys-200 and Cys-220 are disulfide-bonded. Asp-207 acts as the Nucleophile in catalysis. A glycan (N-linked (GlcNAc...) asparagine) is linked at Asn-230. Arg-275 and Trp-277 together coordinate substrate. The N-linked (GlcNAc...) asparagine glycan is linked to Asn-303.

Belongs to the pectinesterase family. As to expression, pollen, and at much lower levels in pistils and petals.

It is found in the secreted. It localises to the cell wall. It catalyses the reaction [(1-&gt;4)-alpha-D-galacturonosyl methyl ester](n) + n H2O = [(1-&gt;4)-alpha-D-galacturonosyl](n) + n methanol + n H(+). It participates in glycan metabolism; pectin degradation; 2-dehydro-3-deoxy-D-gluconate from pectin: step 1/5. May play a role in pollen germination and/or tube growth. In Petunia integrifolia (Violet-flowered petunia), this protein is Pectinesterase (PPE1).